We begin with the raw amino-acid sequence, 690 residues long: Proprotein convertase subtilisin/kexin type 9 (690 aa).

The N-terminal stretch at 1-28 is a signal peptide; it reads MGTVRSRRLWWPLPLLLLLLRGPAGARA. Positions 29–150 are excised as a propeptide; it reads QEDDDGDYEE…IEEDSYVFAQ (122 aa). Position 36 is a sulfotyrosine (Y36). S45 is modified (phosphoserine). The region spanning 75 to 147 is the Inhibitor I9 domain; sequence TYVVVLKEET…VDYIEEDSYV (73 aa). One can recognise a Peptidase S8 domain in the interval 153-459; sequence PWNLERITPA…GWQLFCRTVW (307 aa). Residues D184 and H224 each act as charge relay system in the active site. 2 disulfides stabilise this stretch: C221-C253 and C321-C356. Catalysis depends on S384, which acts as the Charge relay system. Residues 448–690 are C-terminal domain; sequence GAGWQLFCRT…HLAQASQELQ (243 aa). 3 disulfides stabilise this stretch: C455–C525, C475–C524, and C484–C507. N531 carries an N-linked (GlcNAc...) asparagine glycan. 6 cysteine pairs are disulfide-bonded: C532-C599, C550-C598, C560-C586, C606-C677, C624-C676, and C633-C652. S686 carries the phosphoserine modification.

The protein belongs to the peptidase S8 family. As to quaternary structure, monomer. Can self-associate to form dimers and higher multimers which may have increased LDLR degrading activity. The precursor protein but not the mature protein may form multimers. Interacts with APOB, VLDLR, LRP8/APOER2 and BACE1. The full-length immature form (pro-PCSK9) interacts with SCNN1A, SCNN1B and SCNN1G. The pro-PCSK9 form (via C-terminal domain) interacts with LDLR. Interacts (via the C-terminal domain) with ANXA2 (via repeat Annexin 1); the interaction inhibits the degradation of LDLR. Ca(2+) is required as a cofactor. Cleavage by furin and PCSK5 generates a truncated inactive protein that is unable to induce LDLR degradation. Post-translationally, undergoes autocatalytic cleavage in the endoplasmic reticulum to release the propeptide from the N-terminus and the cleavage of the propeptide is strictly required for its maturation and activation. The cleaved propeptide however remains associated with the catalytic domain through non-covalent interactions, preventing potential substrates from accessing its active site. As a result, it is secreted from cells as a propeptide-containing, enzymatically inactive protein. In terms of processing, phosphorylation protects the propeptide against proteolysis.

The protein resides in the cytoplasm. Its subcellular location is the secreted. The protein localises to the endosome. It localises to the lysosome. It is found in the cell surface. The protein resides in the endoplasmic reticulum. Its subcellular location is the golgi apparatus. Its activity is regulated as follows. Its proteolytic activity is autoinhibited by the non-covalent binding of the propeptide to the catalytic domain. Inhibited by EGTA. In terms of biological role, crucial player in the regulation of plasma cholesterol homeostasis. Binds to low-density lipid receptor family members: low density lipoprotein receptor (LDLR), very low density lipoprotein receptor (VLDLR), apolipoprotein E receptor (LRP1/APOER) and apolipoprotein receptor 2 (LRP8/APOER2), and promotes their degradation in intracellular acidic compartments. Acts via a non-proteolytic mechanism to enhance the degradation of the hepatic LDLR through a clathrin LDLRAP1/ARH-mediated pathway. May prevent the recycling of LDLR from endosomes to the cell surface or direct it to lysosomes for degradation. Can induce ubiquitination of LDLR leading to its subsequent degradation. Inhibits intracellular degradation of APOB via the autophagosome/lysosome pathway in a LDLR-independent manner. Involved in the disposal of non-acetylated intermediates of BACE1 in the early secretory pathway. Inhibits epithelial Na(+) channel (ENaC)-mediated Na(+) absorption by reducing ENaC surface expression primarily by increasing its proteasomal degradation. Regulates neuronal apoptosis via modulation of LRP8/APOER2 levels and related anti-apoptotic signaling pathways. This Ateles geoffroyi (Black-handed spider monkey) protein is Proprotein convertase subtilisin/kexin type 9 (PCSK9).